The chain runs to 118 residues: MRGRTRIGKFTTCGERNPKKVARTQPTKKDLKTQNPILHSDQGWLYQMVGYQAILRENSIQQNMSRKGNYLDNNAMENFFGRLKTECYYDKRFETFKQLKKQLMSIFIITTMITFRGN.

The protein belongs to the transposase IS3/IS150/IS904 family.

This is an uncharacterized protein from Haemophilus influenzae (strain ATCC 51907 / DSM 11121 / KW20 / Rd).